The following is a 121-amino-acid chain: Aspartate 1-decarboxylase (121 aa).

The Schiff-base intermediate with substrate; via pyruvic acid role is filled by serine 25. Serine 25 carries the pyruvic acid (Ser) modification. Threonine 57 is a substrate binding site. Tyrosine 58 (proton donor) is an active-site residue. Position 73–75 (73–75 (GAA)) interacts with substrate.

It belongs to the PanD family. As to quaternary structure, heterooctamer of four alpha and four beta subunits. It depends on pyruvate as a cofactor. Post-translationally, is synthesized initially as an inactive proenzyme, which is activated by self-cleavage at a specific serine bond to produce a beta-subunit with a hydroxyl group at its C-terminus and an alpha-subunit with a pyruvoyl group at its N-terminus.

Its subcellular location is the cytoplasm. It carries out the reaction L-aspartate + H(+) = beta-alanine + CO2. Its pathway is cofactor biosynthesis; (R)-pantothenate biosynthesis; beta-alanine from L-aspartate: step 1/1. Catalyzes the pyruvoyl-dependent decarboxylation of aspartate to produce beta-alanine. This chain is Aspartate 1-decarboxylase, found in Wolinella succinogenes (strain ATCC 29543 / DSM 1740 / CCUG 13145 / JCM 31913 / LMG 7466 / NCTC 11488 / FDC 602W) (Vibrio succinogenes).